The primary structure comprises 207 residues: dTTP/UTP pyrophosphatase (207 aa).

The active-site Proton acceptor is D87.

It belongs to the Maf family. YhdE subfamily. A divalent metal cation is required as a cofactor.

Its subcellular location is the cytoplasm. The enzyme catalyses dTTP + H2O = dTMP + diphosphate + H(+). It catalyses the reaction UTP + H2O = UMP + diphosphate + H(+). Its function is as follows. Nucleoside triphosphate pyrophosphatase that hydrolyzes dTTP and UTP. May have a dual role in cell division arrest and in preventing the incorporation of modified nucleotides into cellular nucleic acids. The protein is dTTP/UTP pyrophosphatase of Bordetella pertussis (strain Tohama I / ATCC BAA-589 / NCTC 13251).